The chain runs to 209 residues: Ribosomal RNA large subunit methyltransferase E (209 aa).

Residues Gly63, Trp65, Asp83, Asp99, and Asp124 each contribute to the S-adenosyl-L-methionine site. Catalysis depends on Lys164, which acts as the Proton acceptor.

Belongs to the class I-like SAM-binding methyltransferase superfamily. RNA methyltransferase RlmE family.

The protein resides in the cytoplasm. It carries out the reaction uridine(2552) in 23S rRNA + S-adenosyl-L-methionine = 2'-O-methyluridine(2552) in 23S rRNA + S-adenosyl-L-homocysteine + H(+). In terms of biological role, specifically methylates the uridine in position 2552 of 23S rRNA at the 2'-O position of the ribose in the fully assembled 50S ribosomal subunit. This chain is Ribosomal RNA large subunit methyltransferase E, found in Aliivibrio salmonicida (strain LFI1238) (Vibrio salmonicida (strain LFI1238)).